The sequence spans 253 residues: Hydroxypyruvate/pyruvate aldolase (253 aa).

H48 (proton acceptor) is an active-site residue. The a divalent metal cation site is built by E151 and D177.

Belongs to the HpcH/HpaI aldolase family. It depends on a divalent metal cation as a cofactor.

It catalyses the reaction D-glyceraldehyde + pyruvate = 2-dehydro-3-deoxy-L-galactonate. Functionally, aldolase which can catalyze in vitro the aldolisation reaction between hydroxypyruvate (HPA) or pyruvate (PA) and D-glyceraldehyde (D-GA). The condensation of pyruvate and D-glyceraldehyde produces 2-dehydro-3-deoxy-L-galactonate. Has weak activity with hydroxypyruvate and D-glyceraldehyde. In Sagittula stellata (strain ATCC 700073 / DSM 11524 / E-37), this protein is Hydroxypyruvate/pyruvate aldolase.